Reading from the N-terminus, the 125-residue chain is Multifunctional methyltransferase subunit TRM112-like protein (125 aa).

One can recognise a TRM112 domain in the interval 2–121 (KLFVHNFMSS…RDGIPNMLKV (120 aa)).

Belongs to the TRM112 family.

The protein resides in the nucleus. It localises to the nucleoplasm. Its subcellular location is the cytoplasm. The protein localises to the perinuclear region. In terms of biological role, acts as an activator of both RNA and protein methyltransferases. The chain is Multifunctional methyltransferase subunit TRM112-like protein from Caenorhabditis elegans.